Reading from the N-terminus, the 370-residue chain is Trans-enoyl reductase xenG (370 aa).

Positions 1–32 (MASTGLPQLPPSQKAVIQSEKTPGAFEVSENR) are disordered. Residues 54-57 (CDWK), 177-180 (STAS), 200-203 (SPKN), Y218, 265-266 (FE), and 356-357 (VS) each bind NADP(+).

The protein belongs to the zinc-containing alcohol dehydrogenase family. Monomer.

Its pathway is mycotoxin biosynthesis. Its function is as follows. Trans-enoyl reductase; part of the gene cluster that mediates the biosynthesis of xenoacremones such as xenoacremone A, a compound that shows inhibitory activity toward the PI3K/AKT signaling pathway and which has the ability to induce apoptosis of A549 lung cancer cells. Within the pathway, cooperation of the hybrid PKS-NRPS xenE and the trans-acting enoyl reductase xenG is responsible for the formation of the reduced tyrosine-nonaketide derivative. The alpha/beta hydrolase xenA then accelerates intramolecular nucleophilic attack to give a pyrrolidone derivative. Subsequently, three enzymes, xenF, xenD, and xenC, coordinately participate in the conversion to xenoacremone B. XenF catalyzes sigmatropic rearrangement to form an A-ring, which leads to an unusual intermediate with a hexane ring, which is required for the formation of the tricarbocyclic product. Epoxidation catalyzed by xenD and the formation of the paracyclophane ether catalyzed by xenC initiate a spontaneous intramolecular Diels-Alder (IMDA) reaction to yield xenoacremone B. Spontaneous hydration of xenoacremone B leads to the formation of xenoacremone A, which undergoes subsequent methylation to afford xenoacremone C. In Xenoacremonium sinensis (Endophyte fungus), this protein is Trans-enoyl reductase xenG.